Consider the following 339-residue polypeptide: Phenylalanine--tRNA ligase alpha subunit (339 aa).

Glutamate 250 is a binding site for Mg(2+).

This sequence belongs to the class-II aminoacyl-tRNA synthetase family. Phe-tRNA synthetase alpha subunit type 1 subfamily. Tetramer of two alpha and two beta subunits. The cofactor is Mg(2+).

It is found in the cytoplasm. It carries out the reaction tRNA(Phe) + L-phenylalanine + ATP = L-phenylalanyl-tRNA(Phe) + AMP + diphosphate + H(+). The sequence is that of Phenylalanine--tRNA ligase alpha subunit from Bacteroides thetaiotaomicron (strain ATCC 29148 / DSM 2079 / JCM 5827 / CCUG 10774 / NCTC 10582 / VPI-5482 / E50).